A 535-amino-acid chain; its full sequence is MAKKKERAVNVSGKPRHSLDVNRANDKKGAGGGAGGGGGGRSAATVRRLKMYKMRPLRDRGGKILKHDLQSKELPNTRIEPDRRWFGNTRVVNQKELEFFREELQSRLSNNYNVILKERKLPLSLLQDHQKQARAHLLDTEPFEHAFGPKGKRKRPKLMALDYESLLKKADDSQGAFEDKHATAKLLKEEEEDGLRDLVRHTMFEKGQSKRIWGELYKVIDSSDVVVQVLDARDPMGTRCYHLEKHLKENAKHKHLVFLLNKCDLVPAWATKGWLRTLSKDYPTLAFHASINSSFGKGSLLSVLRQFARLKSDKQAISVGFVGYPNVGKSSVINTLRSKSVCKVAPIPGETKVWQYITLTKRIFLIDCPGVVYQNNDSETDIVLKGVVRVTNLADASEHIGEVLRRVKKEHLKRAYKIEDWVDDNDFLVQLSKTTGKLLRGGEPDLTTTAKMVLHDWQRGKIPFFVPPPQQGEDSPSETAEPVDKSDEEGVSSDRTAAAMKAIAGIISSQQQMNVPCQKEFGVTNEDSEVAEQSE.

The interval 1-42 is disordered; sequence MAKKKERAVNVSGKPRHSLDVNRANDKKGAGGGAGGGGGGRS. A compositionally biased stretch (basic and acidic residues) spans 17–29; the sequence is HSLDVNRANDKKG. The span at 30-41 shows a compositional bias: gly residues; that stretch reads AGGGAGGGGGGR. The CP-type G domain maps to 213–374; that stretch reads WGELYKVIDS…LIDCPGVVYQ (162 aa). Residues 261-264 are G4; it reads NKCD. Residues 290–292 are G5; sequence SIN. Residues 323–330 are G1; it reads GYPNVGKS. Residues 349-353 form a G2 region; sequence GETKV. The interval 367-370 is G3; sequence DCPG. The segment at 464–495 is disordered; that stretch reads FFVPPPQQGEDSPSETAEPVDKSDEEGVSSDR.

This sequence belongs to the TRAFAC class YlqF/YawG GTPase family. RsgA subfamily.

It localises to the nucleus. It is found in the nucleolus. Functionally, GTPase involved in pre-60S ribosomal subunit maturation. This is Nuclear/nucleolar GTPase 2 from Oryza sativa subsp. indica (Rice).